We begin with the raw amino-acid sequence, 151 residues long: UPF0178 protein Desal_2673 (151 aa).

This sequence belongs to the UPF0178 family.

In Maridesulfovibrio salexigens (strain ATCC 14822 / DSM 2638 / NCIMB 8403 / VKM B-1763) (Desulfovibrio salexigens), this protein is UPF0178 protein Desal_2673.